Consider the following 487-residue polypeptide: N-succinylglutamate 5-semialdehyde dehydrogenase (487 aa).

G221 to G226 is a binding site for NAD(+). Residues E244 and C278 contribute to the active site.

It belongs to the aldehyde dehydrogenase family. AstD subfamily.

It catalyses the reaction N-succinyl-L-glutamate 5-semialdehyde + NAD(+) + H2O = N-succinyl-L-glutamate + NADH + 2 H(+). Its pathway is amino-acid degradation; L-arginine degradation via AST pathway; L-glutamate and succinate from L-arginine: step 4/5. Catalyzes the NAD-dependent reduction of succinylglutamate semialdehyde into succinylglutamate. In Burkholderia ambifaria (strain MC40-6), this protein is N-succinylglutamate 5-semialdehyde dehydrogenase.